The following is a 387-amino-acid chain: Protein REVEILLE 1 (387 aa).

Polar residues-rich tracts occupy residues 1–17 and 27–37; these read MASS…NASL and KQIQFNDQSFG. Residues 1 to 44 form a disordered region; it reads MASSPLTANVQGTNASLRNRDEETADKQIQFNDQSFGGNDYAPK. Residues 50-104 form the HTH myb-type domain; that stretch reads TITKERERWTDEEHKKFVEALKLYGRAWRRIEEHVGSKTAVQIRSHAQKFFSKVA. The H-T-H motif DNA-binding region spans 77-100; the sequence is WRRIEEHVGSKTAVQIRSHAQKFF. Disordered regions lie at residues 105–200, 306–334, and 350–387; these read REAT…TANA, KAVQ…TTEP, and AFSE…HLHL. Residues 124 to 134 show a composition bias toward basic residues; that stretch reads RPKRKPAHPYP. The segment covering 141–166 has biased composition (polar residues); that stretch reads ADQTSRSVSPSERDTQSPTSVLSTVG. Composition is skewed to low complexity over residues 172–200 and 312–323; these read SLDS…TANA and GSSTGSNTGSVD. Over residues 324 to 333 the composition is skewed to basic and acidic residues; the sequence is DTGHTEKTTE.

It localises to the nucleus. In terms of biological role, morning-phased transcription factor integrating the circadian clock and auxin pathways. Binds to the evening element (EE) of promoters. Does not act within the central clock, but regulates free auxin levels in a time-of-day specific manner. Positively regulates the expression of YUC8 during the day, but has no effect during the night. Negative regulator of freezing tolerance. The protein is Protein REVEILLE 1 (RVE1) of Arabidopsis thaliana (Mouse-ear cress).